The chain runs to 379 residues: Succinyl-diaminopimelate desuccinylase (379 aa).

Zn(2+) is bound at residue histidine 70. The active site involves aspartate 72. Aspartate 103 is a binding site for Zn(2+). Residue glutamate 137 is the Proton acceptor of the active site. Positions 138, 166, and 352 each coordinate Zn(2+).

Belongs to the peptidase M20A family. DapE subfamily. Homodimer. The cofactor is Zn(2+). Co(2+) is required as a cofactor.

It carries out the reaction N-succinyl-(2S,6S)-2,6-diaminopimelate + H2O = (2S,6S)-2,6-diaminopimelate + succinate. It functions in the pathway amino-acid biosynthesis; L-lysine biosynthesis via DAP pathway; LL-2,6-diaminopimelate from (S)-tetrahydrodipicolinate (succinylase route): step 3/3. Functionally, catalyzes the hydrolysis of N-succinyl-L,L-diaminopimelic acid (SDAP), forming succinate and LL-2,6-diaminopimelate (DAP), an intermediate involved in the bacterial biosynthesis of lysine and meso-diaminopimelic acid, an essential component of bacterial cell walls. The sequence is that of Succinyl-diaminopimelate desuccinylase from Burkholderia ambifaria (strain ATCC BAA-244 / DSM 16087 / CCUG 44356 / LMG 19182 / AMMD) (Burkholderia cepacia (strain AMMD)).